The chain runs to 231 residues: E3 ubiquitin-protein ligase At3g02290 (231 aa).

Positions 103–118 (GSSHSHEEVEPLRSDS) are enriched in basic and acidic residues. The disordered stretch occupies residues 103–125 (GSSHSHEEVEPLRSDSDADSESF). The RING-type; atypical zinc-finger motif lies at 181–222 (CPTCLEEYTSENPKIVTKCSHHFHLSCIYEWMERSENCPVCG).

Its subcellular location is the cytoplasm. It carries out the reaction S-ubiquitinyl-[E2 ubiquitin-conjugating enzyme]-L-cysteine + [acceptor protein]-L-lysine = [E2 ubiquitin-conjugating enzyme]-L-cysteine + N(6)-ubiquitinyl-[acceptor protein]-L-lysine.. The protein operates within protein modification; protein ubiquitination. Its function is as follows. Mediates E2-dependent protein ubiquitination. This Arabidopsis thaliana (Mouse-ear cress) protein is E3 ubiquitin-protein ligase At3g02290.